A 22-amino-acid chain; its full sequence is Oxygen-evolving enhancer protein 2 (22 aa).

The protein belongs to the PsbP family.

It is found in the plastid. It localises to the chloroplast thylakoid membrane. Its function is as follows. May be involved in the regulation of photosystem II. This Physcomitrium patens (Spreading-leaved earth moss) protein is Oxygen-evolving enhancer protein 2.